We begin with the raw amino-acid sequence, 371 residues long: Sensor histidine kinase YvfT (371 aa).

The Extracellular portion of the chain corresponds to 1–10; sequence MKKAISIFPK. The chain crosses the membrane as a helical span at residues 11-31; the sequence is EFGFFPYIFLVYTIMPFLSLL. Over 32 to 38 the chain is Cytoplasmic; sequence KESGVKQ. The helical transmembrane segment at 39–59 threads the bilayer; it reads GIGYGMLLLFVAAYRQLFCSV. The Extracellular segment spans residues 60–71; sequence GKASFTYWLIVQ. Residues 72 to 92 traverse the membrane as a helical segment; that stretch reads MAVILMYSVFYNITYIYLGFF. Residues 93 to 109 lie on the Cytoplasmic side of the membrane; it reads PANFVGYYKEKTNFNRA. Residues 110 to 130 traverse the membrane as a helical segment; sequence FCALIFILLFPCLYQFIANSV. The Extracellular portion of the chain corresponds to 131–135; sequence SLREL. A helical membrane pass occupies residues 136-156; the sequence is FSVLPFLVIMLISPFGIRSMF. At 157–371 the chain is on the cytoplasmic side; that stretch reads RRIELEAKLA…LTIPLIKKAE (215 aa). The region spanning 187 to 368 is the Histidine kinase domain; it reads DLHDTLGHTL…VVALTIPLIK (182 aa). Histidine 189 is subject to Phosphohistidine; by autocatalysis.

It localises to the cell membrane. The catalysed reaction is ATP + protein L-histidine = ADP + protein N-phospho-L-histidine.. In terms of biological role, member of the two-component regulatory system YvfT/YvfU. Probably activates YvfU by phosphorylation. This Bacillus subtilis (strain 168) protein is Sensor histidine kinase YvfT (yvfT).